The primary structure comprises 122 residues: Secreted RxLR effector protein RXLR-C251 (122 aa).

The first 24 residues, 1–24 (MRFFYKLALMTTVASLACSDTALA), serve as a signal peptide directing secretion. The short motif at 48–51 (RSLR) is the RxLR element.

Belongs to the RxLR effector family.

The protein resides in the secreted. It is found in the host cytoplasm. It localises to the host nucleus. In terms of biological role, secreted effector that does not suppress pattern-triggered immunity (PTI) in plant host. The polypeptide is Secreted RxLR effector protein RXLR-C251 (Plasmopara halstedii (Downy mildew of sunflower)).